A 525-amino-acid polypeptide reads, in one-letter code: GMP synthase [glutamine-hydrolyzing] (525 aa).

A Glutamine amidotransferase type-1 domain is found at 9-207; the sequence is RILILDFGSQ…VRDICQCEAL (199 aa). The Nucleophile role is filled by Cys-86. Catalysis depends on residues His-181 and Glu-183. In terms of domain architecture, GMPS ATP-PPase spans 208-400; it reads WTPAKIIDDA…LGLPYDMLYR (193 aa). Residue 235–241 coordinates ATP; the sequence is SGGVDSS.

As to quaternary structure, homodimer.

The enzyme catalyses XMP + L-glutamine + ATP + H2O = GMP + L-glutamate + AMP + diphosphate + 2 H(+). It functions in the pathway purine metabolism; GMP biosynthesis; GMP from XMP (L-Gln route): step 1/1. Its function is as follows. Catalyzes the synthesis of GMP from XMP. The protein is GMP synthase [glutamine-hydrolyzing] of Salmonella typhimurium (strain LT2 / SGSC1412 / ATCC 700720).